Here is a 412-residue protein sequence, read N- to C-terminus: D-xylonate dehydratase (412 aa).

Homooctamer.

It carries out the reaction D-xylonate = 2-dehydro-3-deoxy-D-arabinonate + H2O. NADP-dependent D-xylose dehydrogenase involved in the degradation of D-xylose, a major component of hemicelluloses such as xylan. Catalyzes the third reaction in the xylose utilization pathway through dehydratation of D-xylonate into 2-dehydro-3-deoxy-D-xylonate. The polypeptide is D-xylonate dehydratase (Haloferax volcanii (strain ATCC 29605 / DSM 3757 / JCM 8879 / NBRC 14742 / NCIMB 2012 / VKM B-1768 / DS2) (Halobacterium volcanii)).